The following is a 1331-amino-acid chain: Probable serine/threonine-protein kinase DDB_G0272254 (1331 aa).

Composition is skewed to low complexity over residues 1 to 42 (METS…NSSS), 96 to 116 (NDNN…NNNN), and 153 to 175 (TQQT…STPS). 3 disordered regions span residues 1-43 (METS…SSSA), 92-132 (DKIC…QQIS), and 150-175 (ILNT…STPS). 2 consecutive transmembrane segments (helical) span residues 201–221 (FGFS…IYIL) and 224–244 (FVLK…FVIY). Residues 259-287 (SINDSDSSSNNNNNNNNTTTTNNDSASTK) show a composition bias toward low complexity. Disordered regions lie at residues 259-300 (SIND…PETY), 320-419 (NLNN…LSKE), 435-464 (SVGK…SHNI), and 512-581 (AHSN…VVGN). Residues 288–299 (GNNNNEISSPET) show a composition bias toward polar residues. Polar residues predominate over residues 436 to 450 (VGKTHNRSSSGSDSI). Over residues 514 to 531 (SNNNNNNNNSNTNNNNNN) the composition is skewed to low complexity. Residues 532 to 555 (QSVSAPVSQLATPVYQTPGTNSVV) are compositionally biased toward polar residues. The span at 557–577 (NLENDNENNNDSFSDINDNNS) shows a compositional bias: low complexity. Kelch repeat units lie at residues 665 to 710 (SLVL…NHDY), 716 to 769 (KFYL…RYGN), 770 to 816 (RFLL…GHTS), 822 to 868 (KLII…ELND), 909 to 959 (NIVM…LIKN), and 962 to 1008 (KLFI…NNNN). Residues 834–860 (NNNNNNNNNNNNNNNNNNNNNNNNNNN) are compositionally biased toward low complexity. The disordered stretch occupies residues 834–862 (NNNNNNNNNNNNNNNNNNNNNNNNNNNKG). Residues 976 to 1042 (NNNSSSGGNN…NNNNNNNNNN (67 aa)) form a disordered region. Positions 1073–1331 (IKIDKEIGKG…EITNYLTKTF (259 aa)) constitute a Protein kinase domain. ATP is bound by residues 1079–1087 (IGKGHFSKV) and lysine 1100. The Proton acceptor role is filled by aspartate 1200.

Belongs to the protein kinase superfamily. TKL Ser/Thr protein kinase family.

The protein localises to the membrane. The enzyme catalyses L-seryl-[protein] + ATP = O-phospho-L-seryl-[protein] + ADP + H(+). It carries out the reaction L-threonyl-[protein] + ATP = O-phospho-L-threonyl-[protein] + ADP + H(+). This Dictyostelium discoideum (Social amoeba) protein is Probable serine/threonine-protein kinase DDB_G0272254.